The primary structure comprises 318 residues: Biotin synthase (318 aa).

The Radical SAM core domain maps to 44 to 270; it reads LCGDAVNLCS…INPTANIRLA (227 aa). Residues cysteine 62, cysteine 66, and cysteine 69 each contribute to the [4Fe-4S] cluster site. [2Fe-2S] cluster-binding residues include serine 106, cysteine 138, cysteine 198, and arginine 268.

Belongs to the radical SAM superfamily. Biotin synthase family. In terms of assembly, homodimer. The cofactor is [4Fe-4S] cluster. Requires [2Fe-2S] cluster as cofactor.

The catalysed reaction is (4R,5S)-dethiobiotin + (sulfur carrier)-SH + 2 reduced [2Fe-2S]-[ferredoxin] + 2 S-adenosyl-L-methionine = (sulfur carrier)-H + biotin + 2 5'-deoxyadenosine + 2 L-methionine + 2 oxidized [2Fe-2S]-[ferredoxin]. The protein operates within cofactor biosynthesis; biotin biosynthesis; biotin from 7,8-diaminononanoate: step 2/2. Functionally, catalyzes the conversion of dethiobiotin (DTB) to biotin by the insertion of a sulfur atom into dethiobiotin via a radical-based mechanism. This chain is Biotin synthase, found in Alkaliphilus metalliredigens (strain QYMF).